The following is a 298-amino-acid chain: tRNA pseudouridine synthase B (298 aa).

D45 acts as the Nucleophile in catalysis.

The protein belongs to the pseudouridine synthase TruB family. Type 1 subfamily.

It carries out the reaction uridine(55) in tRNA = pseudouridine(55) in tRNA. Functionally, responsible for synthesis of pseudouridine from uracil-55 in the psi GC loop of transfer RNAs. In Thiobacillus denitrificans (strain ATCC 25259 / T1), this protein is tRNA pseudouridine synthase B.